The primary structure comprises 227 residues: Orotidine 5'-phosphate decarboxylase (227 aa).

Substrate is bound by residues aspartate 8, lysine 30, 57-66 (DLKFHDIPNT), threonine 116, arginine 177, glutamine 186, glycine 206, and arginine 207. Residue lysine 59 is the Proton donor of the active site.

It belongs to the OMP decarboxylase family. Type 1 subfamily. In terms of assembly, homodimer.

The catalysed reaction is orotidine 5'-phosphate + H(+) = UMP + CO2. Its pathway is pyrimidine metabolism; UMP biosynthesis via de novo pathway; UMP from orotate: step 2/2. Functionally, catalyzes the decarboxylation of orotidine 5'-monophosphate (OMP) to uridine 5'-monophosphate (UMP). The sequence is that of Orotidine 5'-phosphate decarboxylase from Acinetobacter baylyi (strain ATCC 33305 / BD413 / ADP1).